The chain runs to 111 residues: Prothymosin alpha (111 aa).

N-acetylmethionine is present on Met-1. The disordered stretch occupies residues 1-111 (MSDAAVDTSS…TKKQKTDEDD (111 aa)). Ser-2 is modified (N-acetylserine; in Prothymosin alpha, N-terminally processed). At Ser-2 the chain carries Phosphoserine. Residue Thr-8 is modified to Phosphothreonine. A phosphoserine mark is found at Ser-9 and Ser-10. Phosphothreonine occurs at positions 13 and 14. A compositionally biased stretch (basic and acidic residues) spans 13 to 31 (TTKDLKEKKEVVEEAENGR). Lys-15 carries the post-translational modification N6-acetyllysine; alternate. Lys-15 is modified (N6-succinyllysine; alternate). Residues 40 to 84 (ENEENGEQEADNEVDEEEEEGGEEEEEEEEGDGEEEDGDEDEEAE) are compositionally biased toward acidic residues. Residues 101–111 (DTKKQKTDEDD) show a composition bias toward basic and acidic residues. Phosphothreonine is present on Thr-102. At Lys-103 the chain carries N6-acetyllysine; alternate. A Glycyl lysine isopeptide (Lys-Gly) (interchain with G-Cter in SUMO2); alternate cross-link involves residue Lys-103. Residue Thr-107 is modified to Phosphothreonine.

The protein belongs to the pro/parathymosin family. In terms of assembly, interacts with NUPR1; regulates apoptotic process. Covalently linked to a small RNA of about 20 nucleotides.

The protein localises to the nucleus. Functionally, prothymosin alpha may mediate immune function by conferring resistance to certain opportunistic infections. This Homo sapiens (Human) protein is Prothymosin alpha (PTMA).